The following is a 199-amino-acid chain: Guanylyl cyclase-activating protein 1 (199 aa).

Glycine 2 carries N-myristoyl glycine lipidation. Asparagine 3 is modified (deamidated asparagine). 4 EF-hand domains span residues 13-48, 50-85, 86-121, and 129-164; these read SATE…KNLS, SANK…VLKG, KVDQ…IRAI, and TAEE…DEVL. Positions 63, 65, 67, 69, 74, 99, 101, 103, 105, 110, 142, 144, 146, 148, and 153 each coordinate Ca(2+).

Retina, in rod and cone outer segments, and pineal gland.

Stimulates retinal guanylyl cyclase when free calcium ions concentration is low and inhibits guanylyl cyclase when free calcium ions concentration is elevated. This Ca(2+)-sensitive regulation of retinal guanylyl cyclase is a key event in recovery of the dark state of rod photoreceptors following light exposure. The polypeptide is Guanylyl cyclase-activating protein 1 (GUCA1A) (Gallus gallus (Chicken)).